The primary structure comprises 426 residues: Serine--tRNA ligase (426 aa).

Position 233–235 (233–235) interacts with L-serine; sequence TSE. 264–266 contributes to the ATP binding site; it reads RSE. Position 287 (Glu287) interacts with L-serine. ATP is bound at residue 351–354; that stretch reads EISS. Ser387 contacts L-serine.

It belongs to the class-II aminoacyl-tRNA synthetase family. Type-1 seryl-tRNA synthetase subfamily. Homodimer. The tRNA molecule binds across the dimer.

The protein localises to the cytoplasm. It catalyses the reaction tRNA(Ser) + L-serine + ATP = L-seryl-tRNA(Ser) + AMP + diphosphate + H(+). It carries out the reaction tRNA(Sec) + L-serine + ATP = L-seryl-tRNA(Sec) + AMP + diphosphate + H(+). The protein operates within aminoacyl-tRNA biosynthesis; selenocysteinyl-tRNA(Sec) biosynthesis; L-seryl-tRNA(Sec) from L-serine and tRNA(Sec): step 1/1. In terms of biological role, catalyzes the attachment of serine to tRNA(Ser). Is also able to aminoacylate tRNA(Sec) with serine, to form the misacylated tRNA L-seryl-tRNA(Sec), which will be further converted into selenocysteinyl-tRNA(Sec). The polypeptide is Serine--tRNA ligase (Colwellia psychrerythraea (strain 34H / ATCC BAA-681) (Vibrio psychroerythus)).